Consider the following 197-residue polypeptide: Recombination protein RecR (197 aa).

Residues 57-72 (CSVCFAITEDDPCWIC) form a C4-type zinc finger. Positions 79–174 (GTICVVEEPQ…KVTRLAHGIP (96 aa)) constitute a Toprim domain.

This sequence belongs to the RecR family.

In terms of biological role, may play a role in DNA repair. It seems to be involved in an RecBC-independent recombinational process of DNA repair. It may act with RecF and RecO. The protein is Recombination protein RecR of Geobacter sp. (strain M21).